A 177-amino-acid chain; its full sequence is Probable adenylyl-sulfate kinase (177 aa).

12–19 (GLSGAGKT) is an ATP binding site. The active-site Phosphoserine intermediate is serine 86.

The protein belongs to the APS kinase family.

The enzyme catalyses adenosine 5'-phosphosulfate + ATP = 3'-phosphoadenylyl sulfate + ADP + H(+). It functions in the pathway sulfur metabolism; hydrogen sulfide biosynthesis; sulfite from sulfate: step 2/3. Catalyzes the synthesis of activated sulfate. This Synechocystis sp. (strain ATCC 27184 / PCC 6803 / Kazusa) protein is Probable adenylyl-sulfate kinase (cysC).